We begin with the raw amino-acid sequence, 527 residues long: Metal transporter Nramp6 (527 aa).

Transmembrane regions (helical) follow at residues 38 to 58 (FFSY…PGNF), 71 to 91 (ELLW…SLAA), 115 to 135 (FMLW…EVIG), 143 to 163 (LFNI…LILL), 173 to 193 (LEFL…VELH), 221 to 241 (ISLL…ALVL), 264 to 284 (GLAL…SGAV), 321 to 341 (LFAI…TYAG), 364 to 384 (CLAI…GAGK), 385 to 405 (LIII…VPLL), 427 to 447 (TWII…SSFI), and 458 to 478 (VAIV…LAAI).

The protein belongs to the NRAMP (TC 2.A.55) family. In terms of tissue distribution, expressed in the vascular bundles of shoots, cotyledons, young leaves, sepals and petals, at the top of the flower stem and in the style. Expressed in the peduncle of developing siliques as well as in the septum and the funiculi.

The protein localises to the endomembrane system. In terms of biological role, probable intracellular cadmium (Cd) transporter that participates in the distribution or availability of Cd within the cell. This chain is Metal transporter Nramp6 (NRAMP6), found in Arabidopsis thaliana (Mouse-ear cress).